Reading from the N-terminus, the 80-residue chain is Putative ankyrin repeat protein RC0877 (80 aa).

Residues 6–46 (SGGIPLHAVAKNVRCTSKDIKDYEIYKLLVSYGADINARVE) form an ANK repeat.

This Rickettsia conorii (strain ATCC VR-613 / Malish 7) protein is Putative ankyrin repeat protein RC0877.